We begin with the raw amino-acid sequence, 600 residues long: ATP-dependent lipid A-core flippase (600 aa).

4 helical membrane-spanning segments follow: residues 26-46, 82-102, 167-187, and 266-286; these read VGIFLLSIIGFVIFASTQPML, LLIVLIAAWQGLGSFLGNYFL, VFLFIYLLMMNWKLTLVMLAI, and PMLQLVIYSAMAVLMFLVLFL. In terms of domain architecture, ABC transmembrane type-1 spans 30 to 321; sequence LLSIIGFVIF…LSEVSSTIQK (292 aa). Residues 353–589 enclose the ABC transporter domain; sequence LEVKNLSFFY…NGYYARLHAM (237 aa). 387 to 394 lines the ATP pocket; the sequence is GRSGSGKS.

It belongs to the ABC transporter superfamily. Lipid exporter (TC 3.A.1.106) family. Homodimer.

It is found in the cell inner membrane. The enzyme catalyses ATP + H2O + lipid A-core oligosaccharideSide 1 = ADP + phosphate + lipid A-core oligosaccharideSide 2.. Functionally, involved in lipopolysaccharide (LPS) biosynthesis. Translocates lipid A-core from the inner to the outer leaflet of the inner membrane. Transmembrane domains (TMD) form a pore in the inner membrane and the ATP-binding domain (NBD) is responsible for energy generation. The chain is ATP-dependent lipid A-core flippase from Pseudomonas savastanoi pv. phaseolicola (strain 1448A / Race 6) (Pseudomonas syringae pv. phaseolicola (strain 1448A / Race 6)).